The chain runs to 112 residues: Putative membrane protein insertion efficiency factor (112 aa).

The protein belongs to the UPF0161 family.

Its subcellular location is the cell inner membrane. Could be involved in insertion of integral membrane proteins into the membrane. The protein is Putative membrane protein insertion efficiency factor of Bradyrhizobium diazoefficiens (strain JCM 10833 / BCRC 13528 / IAM 13628 / NBRC 14792 / USDA 110).